We begin with the raw amino-acid sequence, 365 residues long: Aminomethyltransferase (365 aa).

It belongs to the GcvT family. In terms of assembly, the glycine cleavage system is composed of four proteins: P, T, L and H.

The enzyme catalyses N(6)-[(R)-S(8)-aminomethyldihydrolipoyl]-L-lysyl-[protein] + (6S)-5,6,7,8-tetrahydrofolate = N(6)-[(R)-dihydrolipoyl]-L-lysyl-[protein] + (6R)-5,10-methylene-5,6,7,8-tetrahydrofolate + NH4(+). In terms of biological role, the glycine cleavage system catalyzes the degradation of glycine. This chain is Aminomethyltransferase, found in Desulfitobacterium hafniense (strain Y51).